The chain runs to 880 residues: Translation initiation factor IF-2 (880 aa).

The span at 143–228 (EAEAKAKAKA…EAERNGDHHI (86 aa)) shows a compositional bias: basic and acidic residues. Residues 143 to 289 (EAEAKAKAKA…APESMAHGFN (147 aa)) are disordered. Residues 249–262 (GRRARNKSNAKKRG) show a composition bias toward basic residues. The tr-type G domain maps to 380 to 549 (SRAPVVTIMG…LLQAEVLELK (170 aa)). Residues 389-396 (GHVDHGKT) are G1. 389 to 396 (GHVDHGKT) serves as a coordination point for GTP. The tract at residues 414–418 (GITQH) is G2. The G3 stretch occupies residues 435-438 (DTPG). GTP is bound by residues 435–439 (DTPGH) and 489–492 (NKMD). Residues 489 to 492 (NKMD) are G4. Positions 525–527 (SAK) are G5.

Belongs to the TRAFAC class translation factor GTPase superfamily. Classic translation factor GTPase family. IF-2 subfamily.

It localises to the cytoplasm. One of the essential components for the initiation of protein synthesis. Protects formylmethionyl-tRNA from spontaneous hydrolysis and promotes its binding to the 30S ribosomal subunits. Also involved in the hydrolysis of GTP during the formation of the 70S ribosomal complex. The sequence is that of Translation initiation factor IF-2 from Shewanella putrefaciens (strain CN-32 / ATCC BAA-453).